A 213-amino-acid chain; its full sequence is Cytokinin riboside 5'-monophosphate phosphoribohydrolase LOG2 (213 aa).

Residues Glu79, 97–98 (RK), 114–120 (GYGTFEE), and Thr126 contribute to the substrate site.

It belongs to the LOG family. Expressed in roots and shoots. Detected in root hairs.

It localises to the cytoplasm. Its subcellular location is the nucleus. It carries out the reaction N(6)-(dimethylallyl)adenosine 5'-phosphate + H2O = N(6)-dimethylallyladenine + D-ribose 5-phosphate. It catalyses the reaction 9-ribosyl-trans-zeatin 5'-phosphate + H2O = trans-zeatin + D-ribose 5-phosphate. Its function is as follows. Cytokinin-activating enzyme working in the direct activation pathway. Phosphoribohydrolase that converts inactive cytokinin nucleotides to the biologically active free-base forms. This is Cytokinin riboside 5'-monophosphate phosphoribohydrolase LOG2 (LOG2) from Arabidopsis thaliana (Mouse-ear cress).